The primary structure comprises 197 residues: Thymidine kinase (197 aa).

ATP-binding positions include Gly-15–Thr-22 and Asp-93–Gln-96. The active-site Proton acceptor is the Glu-94. Cys-150, Cys-153, Cys-188, and His-191 together coordinate Zn(2+).

This sequence belongs to the thymidine kinase family. As to quaternary structure, homotetramer.

The protein localises to the cytoplasm. It carries out the reaction thymidine + ATP = dTMP + ADP + H(+). This chain is Thymidine kinase, found in Thermococcus kodakarensis (strain ATCC BAA-918 / JCM 12380 / KOD1) (Pyrococcus kodakaraensis (strain KOD1)).